We begin with the raw amino-acid sequence, 1984 residues long: Sodium channel protein type 9 subunit alpha (1984 aa).

Over 1–125 (MAMLPPPGPQ…RRISIKILVH (125 aa)) the chain is Cytoplasmic. Residues 26–47 (RIAEGKTKEPKEEKKDDHDEGP) show a composition bias toward basic and acidic residues. A disordered region spans residues 26 to 55 (RIAEGKTKEPKEEKKDDHDEGPKPSSDLEA). The I repeat unit spans residues 112 to 408 (FSPLRRISIK…VAMAYEEQNQ (297 aa)). Residues 126 to 145 (SLFSMLIMCTILTNCIFMTM) form a helical membrane-spanning segment. The Extracellular segment spans residues 146-150 (NNPAE). Residues 151–172 (WTKNVEYTFTGIYTFESLVKIF) traverse the membrane as a helical segment. Topologically, residues 173 to 185 (ARGFCVGEFTFLR) are cytoplasmic. The chain crosses the membrane as a helical span at residues 186–204 (DPWNWLDFIVIVFAYLTEF). The Extracellular portion of the chain corresponds to 205 to 210 (VNLGNV). The N-linked (GlcNAc...) asparagine glycan is linked to N209. The helical transmembrane segment at 211 to 227 (SALRTFRVLRALKTISV) threads the bilayer. Residues 228-241 (IPGLKTIVGALIQS) lie on the Cytoplasmic side of the membrane. The helical transmembrane segment at 242 to 267 (VKKLSDVIILTVFCLSVFALIGLQLF) threads the bilayer. Residues 268 to 344 (MGHLKHKCLR…PDYGYTSFDT (77 aa)) are Extracellular-facing. An intrachain disulfide couples C275 to C322. An N-linked (GlcNAc...) asparagine glycan is attached at N281. Positions 345–361 (FSWAFLALFRLMTQDYW) form an intramembrane region, pore-forming. Over 362–374 (ENLYQQTLRAAGK) the chain is Extracellular. The chain crosses the membrane as a helical span at residues 375–400 (TYMIFFVVVIFLGSFYLINLILAVVA). At 401–742 (MAYEEQNQAN…FIYIIVMDPF (342 aa)) the chain is on the cytoplasmic side. Positions 459 to 469 (SSSETSKLSSK) are enriched in low complexity. 2 disordered regions span residues 459-517 (SSSE…LGVE) and 563-610 (GSET…PPML). Residues 472-484 (KERRNRRKKKNQK) are compositionally biased toward basic residues. Composition is skewed to basic and acidic residues over residues 487 to 508 (SSGE…ESIS) and 571 to 583 (DEHS…ESRR). One copy of the II repeat lies at 723-986 (CSPFWIKFKK…EEDTDANNLQ (264 aa)). A helical membrane pass occupies residues 743-759 (VDLAITICIVLNTLFMA). Residues 760–768 (MEHHPMTEE) are Extracellular-facing. Residues 769 to 793 (FKNVLVVGNLVFTGIFAAEMVLKLI) traverse the membrane as a helical segment. Residues 794-802 (AMDPYEYFQ) lie on the Cytoplasmic side of the membrane. A helical transmembrane segment spans residues 803 to 819 (VGWNVFDSLIVTLSLVE). The Extracellular segment spans residues 820–828 (LFLADVEGL). The helical transmembrane segment at 829–845 (SVLRSFRLLRVFKLAKS) threads the bilayer. Over 846–862 (WPTLNMLIKIIGNSVGP) the chain is Cytoplasmic. Residues 863–885 (LGNLTLVLAIIVFIFAVVGMQLF) traverse the membrane as a helical segment. The Extracellular segment spans residues 886 to 912 (GKSYKECVCKINDDCSLPRWHMNDFFH). C894 and C900 are oxidised to a cystine. An intramembrane region (pore-forming) is located at residues 913–925 (SFLIVFRVLCGEW). Topologically, residues 926-937 (IETMWDCMEVAG) are extracellular. C932 and C941 are joined by a disulfide. The helical transmembrane segment at 938–964 (QAMCLIVYMMVMVIGNLVVLNLFLALL) threads the bilayer. Over 965–1184 (LSSFSSDNLS…WWNIRKTCYR (220 aa)) the chain is Cytoplasmic. Positions 1087-1146 (PIAPGESDLENMNTEELSSDSESEYSKERLNRSSSSECSTVDNALPGEGEEAEAEPVNSD) are disordered. Polar residues predominate over residues 1118 to 1128 (RSSSSECSTVD). Residues 1134–1146 (EGEEAEAEPVNSD) are compositionally biased toward acidic residues. One copy of the III repeat lies at 1177-1485 (NIRKTCYRIV…KKYYNAMKKL (309 aa)). Residues 1185-1209 (IVEHSWFESFIVLMILLSSGALAFE) form a helical membrane-spanning segment. The Extracellular segment spans residues 1210–1221 (DIYIEKKKTIKI). A helical membrane pass occupies residues 1222–1247 (ILEYADKIFTYIFILEMLLKWVAYGY). At 1248–1249 (KT) the chain is on the cytoplasmic side. Residues 1250–1275 (YFTNAWCWLDFLIVDVSLVTLVANTL) traverse the membrane as a helical segment. Over 1276 to 1284 (GYSDLGPIK) the chain is Extracellular. Residues 1285–1301 (SLRTLRALRPLRALSRF) traverse the membrane as a helical segment. Topologically, residues 1302-1314 (EGMRVVVNALIGA) are cytoplasmic. Residues 1315-1339 (IPSIMNVLLVCLIFWLIFSIMGVNL) form a helical membrane-spanning segment. The Extracellular portion of the chain corresponds to 1340–1391 (FAGKFYQCVNTTDDSRFPTKQVSNRSECFALMNGSQNVRWKNLKVNFDNVGL). Residues C1347 and C1367 are joined by a disulfide bond. N1349, N1363, and N1372 each carry an N-linked (GlcNAc...) asparagine glycan. Positions 1392–1402 (RYLSLLQVATF) form an intramembrane region, pore-forming. Residues 1403 to 1428 (KGWMDIMYAAVDSVNVDQQPSYEHNL) are Extracellular-facing. The chain crosses the membrane as a helical span at residues 1429–1454 (YMYIYFVIFIIFGSFFTLNLFIGVII). Residues 1455 to 1511 (DNFNQQKKKLGGQDIFMTEEQKKYYNAMKKLGSKKPQKPIPRPGNKFQGCIFDLVTN) are Cytoplasmic-facing. Phosphoserine; by PKC is present on S1487. The IV repeat unit spans residues 1494-1792 (IPRPGNKFQG…WEKFDPDATQ (299 aa)). Residues 1512-1531 (QAFDITIMILICLNMVTMMV) traverse the membrane as a helical segment. Topologically, residues 1532–1542 (EKEGQSDYMTD) are extracellular. A helical transmembrane segment spans residues 1543 to 1564 (VLYWINVVFIILFTGECVLKLI). The Cytoplasmic portion of the chain corresponds to 1565–1573 (SLRHYYFTI). The helical transmembrane segment at 1574–1595 (GWNIFDFVVVILSIVGMFLAEL) threads the bilayer. Residues 1596-1604 (IETYFVSPT) lie on the Extracellular side of the membrane. The helical transmembrane segment at 1605 to 1624 (LFRVIRLARIGRILRLIKGA) threads the bilayer. At 1625–1637 (KGIRTLLFALMMS) the chain is on the cytoplasmic side. The chain crosses the membrane as a helical span at residues 1638–1660 (LPALFNIGLLLFLVMFIYAIFGM). Topologically, residues 1661 to 1683 (SNFAYVKKEAGINDMFNFETFGN) are extracellular. The segment at residues 1684–1696 (SMICLFQITTSAG) is an intramembrane region (pore-forming). At 1697-1730 (WDGLLAPILNSAPPDCDPKKVHPGSSTEGDCGSP) the chain is on the extracellular side. C1712 and C1727 form a disulfide bridge. A helical transmembrane segment spans residues 1731–1756 (SVGIFYFVSYIIISFLVVVNMYIAVI). Residues 1757–1984 (LENFSVATEE…KGKDGKETKK (228 aa)) are Cytoplasmic-facing. Positions 1886 to 1915 (EDVSATVIQRAYRRYRLRQNVKNISSIYIK) constitute an IQ domain. Residues 1924 to 1984 (PNKGDIVFDN…KGKDGKETKK (61 aa)) form a disordered region. Residues 1933-1956 (NVNSSSPEKTDATASTISPPSYDS) are compositionally biased toward polar residues. Over residues 1958–1984 (TKPDKEKYEKDKTEKEDKGKDGKETKK) the composition is skewed to basic and acidic residues.

Belongs to the sodium channel (TC 1.A.1.10) family. Nav1.7/SCN9A subfamily. As to quaternary structure, the Nav1.7 voltage-gated sodium channel consists of an ion-conducting alpha subunit SCN9A which is functional on its own regulated by one or more beta-1 (SCN1B), beta-2 (SCN2B), beta-3 (SCN3B) and beta-4 (SCN4B) subunits. SCN1B and SCN3B are non-covalently associated with SCN9A. SCN2B and SCN4B are disulfide-linked to SCN9A. SCN1B regulates channel inactivation. Interacts with NEDD4 and NEDD4L; regulates Nav1.7 activity most probably through ubiquitination and subsequent endocytosis. Interacts with TMEM233; modulates the gating properties of NaV1.7. In terms of processing, phosphorylation at Ser-1487 by PKC in a highly conserved cytoplasmic loop increases peak sodium currents. Post-translationally, ubiquitinated by NEDD4L; which may promote its endocytosis. As to expression, expressed in the sciatic nerve, spinal cord, brainstem, cerebellum and cortex, but not expressed in the lung, skeletal and cardiac muscles, kidney and liver.

Its subcellular location is the cell membrane. The protein localises to the cell projection. The protein resides in the neuron projection. It is found in the axon. The catalysed reaction is Na(+)(in) = Na(+)(out). Its function is as follows. Pore-forming subunit of Nav1.7, a voltage-gated sodium (Nav) channel that directly mediates the depolarizing phase of action potentials in excitable membranes. Navs, also called VGSCs (voltage-gated sodium channels) or VDSCs (voltage-dependent sodium channels), operate by switching between closed and open conformations depending on the voltage difference across the membrane. In the open conformation they allow Na(+) ions to selectively pass through the pore, along their electrochemical gradient. The influx of Na(+) ions provokes membrane depolarization, initiating the propagation of electrical signals throughout cells and tissues. Nav1.7 plays a crucial role in controlling the excitability and action potential propagation from nociceptor neurons, thereby contributing to the sensory perception of pain. The polypeptide is Sodium channel protein type 9 subunit alpha (Oryctolagus cuniculus (Rabbit)).